A 376-amino-acid chain; its full sequence is Alcohol dehydrogenase class-3 (376 aa).

The Zn(2+) site is built by Cys47, His69, Cys99, Cys102, Cys105, Cys113, and Cys176.

The protein belongs to the zinc-containing alcohol dehydrogenase family. Class-III subfamily. In terms of assembly, homodimer. Zn(2+) serves as cofactor. As to expression, expressed in the skeletal muscle, heart, gill filaments and liver, with highest levels in the kidney.

It localises to the cytoplasm. The catalysed reaction is a primary alcohol + NAD(+) = an aldehyde + NADH + H(+). The enzyme catalyses a secondary alcohol + NAD(+) = a ketone + NADH + H(+). It carries out the reaction S-(hydroxymethyl)glutathione + NADP(+) = S-formylglutathione + NADPH + H(+). It catalyses the reaction S-(hydroxymethyl)glutathione + NAD(+) = S-formylglutathione + NADH + H(+). The catalysed reaction is S-nitrosoglutathione + NADH + H(+) = S-(hydroxysulfenamide)glutathione + NAD(+). Functionally, class-III ADH is remarkably ineffective in oxidizing ethanol, but it readily catalyzes the oxidation of long-chain primary alcohols and the oxidation of S-(hydroxymethyl) glutathione. Also acts as a S-nitroso-glutathione reductase by catalyzing the NADH-dependent reduction of S-nitrosoglutathione, thereby regulating protein S-nitrosylation. The polypeptide is Alcohol dehydrogenase class-3 (Sparus aurata (Gilthead sea bream)).